The sequence spans 185 residues: Ribose 1,5-bisphosphate phosphokinase PhnN (185 aa).

Belongs to the ribose 1,5-bisphosphokinase family.

The catalysed reaction is alpha-D-ribose 1,5-bisphosphate + ATP = 5-phospho-alpha-D-ribose 1-diphosphate + ADP. It functions in the pathway metabolic intermediate biosynthesis; 5-phospho-alpha-D-ribose 1-diphosphate biosynthesis; 5-phospho-alpha-D-ribose 1-diphosphate from D-ribose 5-phosphate (route II): step 3/3. In terms of biological role, catalyzes the phosphorylation of ribose 1,5-bisphosphate to 5-phospho-D-ribosyl alpha-1-diphosphate (PRPP). The polypeptide is Ribose 1,5-bisphosphate phosphokinase PhnN (Escherichia coli (strain SMS-3-5 / SECEC)).